Consider the following 243-residue polypeptide: Vesicle-associated membrane protein-associated protein B (243 aa).

Position 2 is an N-acetylalanine (Ala-2). The Cytoplasmic portion of the chain corresponds to 2 to 218 (AKVEQVLSLE…AALAASGKEE (217 aa)). An MSP domain is found at 7–124 (VLSLEPQHEL…MDSKLRCVFE (118 aa)). Ser-146 bears the Phosphoserine mark. Lys-147 is covalently cross-linked (Glycyl lysine isopeptide (Lys-Gly) (interchain with G-Cter in SUMO1)). The residue at position 159 (Ser-159) is a Phosphoserine. The stretch at 161–196 (LDDAEVKKVMEECRRLQGEVQRLREESRQLKEEDGL) forms a coiled coil. Ser-206 carries the phosphoserine modification. The chain crosses the membrane as a helical; Anchor for type IV membrane protein span at residues 219 to 239 (GLSARLLALVVLFFIVGVIIG).

Belongs to the VAMP-associated protein (VAP) (TC 9.B.17) family. As to quaternary structure, homodimer, and heterodimer with VAPA. Interacts with VAMP1 and VAMP2. Interacts (via MSP domain) with ZFYVE27. Interacts with RMDN3. Interacts with KIF5A in a ZFYVE27-dependent manner. Interacts (via MSP domain) with STARD3 (via phospho-FFAT motif). Interacts with STARD3NL (via FFAT motif). Interacts with CERT1. Interacts with PLEKHA3 and SACM1L to form a ternary complex. Interacts with VPS13A (via FFAT motif). Interacts with RB1CC1 (via phosphorylated FFAT motif), MIGA2 (via phosphorylated FFAT motif), RMDN3 (via phosphorylated FFAT motif), OSBPL1A (via FFAT motif), KCNB1 (via phosphorylated FFAT motif) and KCNB2 (via phosphorylated FFAT motif). Interacts (via MSP domain) with WDR44; the interactions connect the endoplasmic reticulum (ER) with the endosomal tubule. In terms of tissue distribution, ubiquitous.

The protein localises to the endoplasmic reticulum membrane. Functionally, endoplasmic reticulum (ER)-anchored protein that mediates the formation of contact sites between the ER and endosomes via interaction with FFAT motif-containing proteins such as STARD3 or WDR44. Interacts with STARD3 in a FFAT motif phosphorylation dependent manner. Via interaction with WDR44 participates in neosynthesized protein export. Participates in the endoplasmic reticulum unfolded protein response (UPR) by inducing ERN1/IRE1 activity. Involved in cellular calcium homeostasis regulation. This Rattus norvegicus (Rat) protein is Vesicle-associated membrane protein-associated protein B.